We begin with the raw amino-acid sequence, 198 residues long: FMN-dependent NADH:quinone oxidoreductase (198 aa).

FMN-binding positions include Ser10, 16-18 (SQS), 94-97 (MYNF), and 138-141 (TRGG).

It belongs to the azoreductase type 1 family. In terms of assembly, homodimer. FMN is required as a cofactor.

The catalysed reaction is 2 a quinone + NADH + H(+) = 2 a 1,4-benzosemiquinone + NAD(+). It catalyses the reaction N,N-dimethyl-1,4-phenylenediamine + anthranilate + 2 NAD(+) = 2-(4-dimethylaminophenyl)diazenylbenzoate + 2 NADH + 2 H(+). Functionally, quinone reductase that provides resistance to thiol-specific stress caused by electrophilic quinones. In terms of biological role, also exhibits azoreductase activity. Catalyzes the reductive cleavage of the azo bond in aromatic azo compounds to the corresponding amines. The polypeptide is FMN-dependent NADH:quinone oxidoreductase (Shewanella baltica (strain OS195)).